The following is a 283-amino-acid chain: uncharacterized protein (283 aa).

3 helical membrane passes run 24–44 (LFGY…GMFI), 64–84 (TIAG…TLIA), and 96–116 (VIAI…GSLS).

This sequence belongs to the MscS (TC 1.A.23) family.

The protein resides in the cell membrane. This is an uncharacterized protein from Buchnera aphidicola subsp. Schizaphis graminum (strain Sg).